A 315-amino-acid chain; its full sequence is tRNA dimethylallyltransferase (315 aa).

An ATP-binding site is contributed by 11–18; the sequence is GPTASGKS. Residue 13–18 coordinates substrate; that stretch reads TASGKS. Interaction with substrate tRNA regions lie at residues 36–39 and 160–164; these read DSMQ and QRLIR.

This sequence belongs to the IPP transferase family. In terms of assembly, monomer. Requires Mg(2+) as cofactor.

The catalysed reaction is adenosine(37) in tRNA + dimethylallyl diphosphate = N(6)-dimethylallyladenosine(37) in tRNA + diphosphate. Catalyzes the transfer of a dimethylallyl group onto the adenine at position 37 in tRNAs that read codons beginning with uridine, leading to the formation of N6-(dimethylallyl)adenosine (i(6)A). In Rickettsia bellii (strain OSU 85-389), this protein is tRNA dimethylallyltransferase.